A 155-amino-acid chain; its full sequence is MAVPGVNKDNIRAGCKKCGYPGHLTFECRNFLRVDPQRDIVLDVSSTSTEDSEDESEEVARAPADKKNVTDTGKKKLKRKKEKKLKKHRKRLHSSSESDDNSKAKKRKSQKKEKRVKHKAKKGKQHKKDKRKEKRERKSSSSSSSSSSSQSSSSD.

The CCHC-type zinc-finger motif lies at 13–30 (AGCKKCGYPGHLTFECRN). Positions 43–155 (DVSSTSTEDS…SSSSQSSSSD (113 aa)) are disordered. Over residues 58–74 (EVARAPADKKNVTDTGK) the composition is skewed to basic and acidic residues. Over residues 75-93 (KKLKRKKEKKLKKHRKRLH) the composition is skewed to basic residues. Residues 94–103 (SSSESDDNSK) show a composition bias toward basic and acidic residues. The segment covering 104 to 137 (AKKRKSQKKEKRVKHKAKKGKQHKKDKRKEKRER) has biased composition (basic residues). Positions 140–155 (SSSSSSSSSSQSSSSD) are enriched in low complexity.

Its function is as follows. Possible splicing regulator involved in the control of cellular survival. This is Protein SREK1IP1 (srek1ip1) from Xenopus tropicalis (Western clawed frog).